The following is a 1460-amino-acid chain: Cilia- and flagella-associated protein 43 (1460 aa).

9 WD repeats span residues 46–87 (EGRY…HLQC), 91–132 (VATV…RLVK), 184–221 (SKGH…MKNY), 303–342 (RRRS…AGHT), 428–468 (IFAC…DSAS), 529–569 (MRDH…MKLP), 589–628 (FGRG…IHYS), 911–951 (EIDP…VTEV), and 1129–1170 (NRRF…CRAV). Coiled-coil stretches lie at residues 1170–1214 (VVEA…AEEA) and 1399–1446 (LGEH…LREA).

It belongs to the CFAP43 family.

Its subcellular location is the cell projection. The protein localises to the cilium. It localises to the flagellum. The protein resides in the cytoplasm. It is found in the cytoskeleton. Its subcellular location is the flagellum axoneme. In terms of biological role, flagellar protein involved in flagellum axoneme organization and function. In Trypanosoma brucei brucei (strain 927/4 GUTat10.1), this protein is Cilia- and flagella-associated protein 43.